Here is a 185-residue protein sequence, read N- to C-terminus: Ribosome-recycling factor (185 aa).

It belongs to the RRF family.

It is found in the cytoplasm. Its function is as follows. Responsible for the release of ribosomes from messenger RNA at the termination of protein biosynthesis. May increase the efficiency of translation by recycling ribosomes from one round of translation to another. This chain is Ribosome-recycling factor, found in Macrococcus caseolyticus (strain JCSC5402) (Macrococcoides caseolyticum).